The following is a 779-amino-acid chain: Ribosome-releasing factor 2, mitochondrial (779 aa).

The region spanning Ala-68–Glu-353 is the tr-type G domain. Residues Ala-77–Thr-84, Asp-141–His-145, and Asn-195–Asp-198 each bind GTP.

The protein belongs to the TRAFAC class translation factor GTPase superfamily. Classic translation factor GTPase family. EF-G/EF-2 subfamily.

Its subcellular location is the mitochondrion. The enzyme catalyses GTP + H2O = GDP + phosphate + H(+). Mitochondrial GTPase that mediates the disassembly of ribosomes from messenger RNA at the termination of mitochondrial protein biosynthesis. Acts in collaboration with MRRF. GTP hydrolysis follows the ribosome disassembly and probably occurs on the ribosome large subunit. Not involved in the GTP-dependent ribosomal translocation step during translation elongation. The polypeptide is Ribosome-releasing factor 2, mitochondrial (Gfm2) (Mus musculus (Mouse)).